Consider the following 955-residue polypeptide: Glycine dehydrogenase (decarboxylating) (955 aa).

Residue Lys705 is modified to N6-(pyridoxal phosphate)lysine.

The protein belongs to the GcvP family. As to quaternary structure, the glycine cleavage system is composed of four proteins: P, T, L and H. Requires pyridoxal 5'-phosphate as cofactor.

It catalyses the reaction N(6)-[(R)-lipoyl]-L-lysyl-[glycine-cleavage complex H protein] + glycine + H(+) = N(6)-[(R)-S(8)-aminomethyldihydrolipoyl]-L-lysyl-[glycine-cleavage complex H protein] + CO2. Functionally, the glycine cleavage system catalyzes the degradation of glycine. The P protein binds the alpha-amino group of glycine through its pyridoxal phosphate cofactor; CO(2) is released and the remaining methylamine moiety is then transferred to the lipoamide cofactor of the H protein. The sequence is that of Glycine dehydrogenase (decarboxylating) from Aliivibrio fischeri (strain MJ11) (Vibrio fischeri).